A 119-amino-acid chain; its full sequence is Beta-2-microglobulin (119 aa).

Residues 1-20 (MARFVVVALLVLLSVSDLEA) form the signal peptide. Residues 25–114 (PKIQVYSRYP…VTFLTPKTVK (90 aa)) enclose the Ig-like C1-type domain. Cys-45 and Cys-100 are joined by a disulfide.

This sequence belongs to the beta-2-microglobulin family. In terms of assembly, heterodimer of an alpha chain and a beta chain. Beta-2-microglobulin is the beta-chain of major histocompatibility complex class I molecules.

It localises to the secreted. Component of the class I major histocompatibility complex (MHC). Involved in the presentation of peptide antigens to the immune system. This is Beta-2-microglobulin (B2M) from Leontocebus fuscicollis (Brown-mantled tamarin).